We begin with the raw amino-acid sequence, 535 residues long: Probable anion transporter 2, chloroplastic (535 aa).

The N-terminal 95 residues, Met-1 to Ser-95, are a transit peptide targeting the chloroplast. The next 12 membrane-spanning stretches (helical) occupy residues Val-125–Val-145, Phe-160–Gly-180, Val-191–Ser-211, Ile-215–Met-235, Ile-254–Met-274, Leu-279–Phe-299, Ile-343–Leu-363, Ala-381–Ala-401, Val-413–Leu-433, Val-443–Phe-463, Gly-483–Leu-503, and Gly-504–Tyr-524.

This sequence belongs to the major facilitator superfamily. Sodium/anion cotransporter (TC 2.A.1.14) family.

It localises to the plastid. It is found in the chloroplast membrane. In terms of biological role, probable anion transporter. The chain is Probable anion transporter 2, chloroplastic (PHT4;2) from Oryza sativa subsp. japonica (Rice).